The chain runs to 159 residues: Cyclic pyranopterin monophosphate synthase (159 aa).

Substrate-binding positions include 75–77 and 113–114; these read LCH and ME. Residue aspartate 128 is part of the active site.

This sequence belongs to the MoaC family. As to quaternary structure, homohexamer; trimer of dimers.

It catalyses the reaction (8S)-3',8-cyclo-7,8-dihydroguanosine 5'-triphosphate = cyclic pyranopterin phosphate + diphosphate. It functions in the pathway cofactor biosynthesis; molybdopterin biosynthesis. Functionally, catalyzes the conversion of (8S)-3',8-cyclo-7,8-dihydroguanosine 5'-triphosphate to cyclic pyranopterin monophosphate (cPMP). In Serratia proteamaculans (strain 568), this protein is Cyclic pyranopterin monophosphate synthase.